The primary structure comprises 84 residues: MDPYGSRPSHPDDGALHGILVAFIAVLCLIGCLWAAYRLFLKECLTDCSQHTSSGVVAGPRPAATGPTAVVVHNGAEAQRSSAF.

Residues 15 to 35 form a helical membrane-spanning segment; the sequence is ALHGILVAFIAVLCLIGCLWA.

As to quaternary structure, interacts with the capsid protein (CP). Part of a MP-CP-viral DNA complex.

The protein resides in the host membrane. Its function is as follows. Involved in the viral transport within, and between cells. The protein is Putative movement protein of Miscanthus streak virus (isolate 91) (MiSV).